We begin with the raw amino-acid sequence, 361 residues long: Peptide chain release factor 1 (361 aa).

Gln-235 carries the post-translational modification N5-methylglutamine.

It belongs to the prokaryotic/mitochondrial release factor family. In terms of processing, methylated by PrmC. Methylation increases the termination efficiency of RF1.

The protein localises to the cytoplasm. Peptide chain release factor 1 directs the termination of translation in response to the peptide chain termination codons UAG and UAA. The polypeptide is Peptide chain release factor 1 (Azoarcus sp. (strain BH72)).